The chain runs to 571 residues: Arginine--tRNA ligase (571 aa).

The 'HIGH' region signature appears at 122–132 (PNIAKEMHVGH).

This sequence belongs to the class-I aminoacyl-tRNA synthetase family. As to quaternary structure, monomer.

Its subcellular location is the cytoplasm. The catalysed reaction is tRNA(Arg) + L-arginine + ATP = L-arginyl-tRNA(Arg) + AMP + diphosphate. The protein is Arginine--tRNA ligase of Buchnera aphidicola subsp. Cinara cedri (strain Cc).